The chain runs to 550 residues: Methionine--tRNA ligase (550 aa).

Positions 13–23 (PYANGPLHFGH) match the 'HIGH' region motif. Positions 145, 148, 158, and 161 each coordinate Zn(2+). The short motif at 331–335 (QFSKS) is the 'KMSKS' region element. Residue K334 participates in ATP binding.

It belongs to the class-I aminoacyl-tRNA synthetase family. MetG type 1 subfamily. As to quaternary structure, monomer. It depends on Zn(2+) as a cofactor.

The protein localises to the cytoplasm. The enzyme catalyses tRNA(Met) + L-methionine + ATP = L-methionyl-tRNA(Met) + AMP + diphosphate. Is required not only for elongation of protein synthesis but also for the initiation of all mRNA translation through initiator tRNA(fMet) aminoacylation. The protein is Methionine--tRNA ligase of Chlamydia trachomatis serovar A (strain ATCC VR-571B / DSM 19440 / HAR-13).